The following is a 611-amino-acid chain: Phosphomethylpyrimidine synthase (611 aa).

Residues Asn-218, Met-247, Tyr-276, His-312, 332 to 334, 373 to 376, and Glu-412 each bind substrate; these read SRG and DGLR. Residue His-416 coordinates Zn(2+). Tyr-439 serves as a coordination point for substrate. His-480 is a Zn(2+) binding site. Residues Cys-560, Cys-563, and Cys-568 each coordinate [4Fe-4S] cluster.

Belongs to the ThiC family. In terms of assembly, homodimer. Requires [4Fe-4S] cluster as cofactor.

It carries out the reaction 5-amino-1-(5-phospho-beta-D-ribosyl)imidazole + S-adenosyl-L-methionine = 4-amino-2-methyl-5-(phosphooxymethyl)pyrimidine + CO + 5'-deoxyadenosine + formate + L-methionine + 3 H(+). The protein operates within cofactor biosynthesis; thiamine diphosphate biosynthesis. Catalyzes the synthesis of the hydroxymethylpyrimidine phosphate (HMP-P) moiety of thiamine from aminoimidazole ribotide (AIR) in a radical S-adenosyl-L-methionine (SAM)-dependent reaction. This is Phosphomethylpyrimidine synthase from Caulobacter sp. (strain K31).